Here is a 246-residue protein sequence, read N- to C-terminus: Auxin-responsive protein IAA11 (246 aa).

The EAR-like (transcriptional repression) motif lies at 36–40 (LGLTL). Residues 136–235 (SMFVKVTMDG…SVRRLRIMKT (100 aa)) form the PB1 domain.

Belongs to the Aux/IAA family. Homodimers and heterodimers. Interacts with TPL. As to expression, preferentially expressed in stems and flowers.

Its subcellular location is the nucleus. Aux/IAA proteins are short-lived transcriptional factors that function as repressors of early auxin response genes at low auxin concentrations. Repression is thought to result from the interaction with auxin response factors (ARFs), proteins that bind to the auxin-responsive promoter element (AuxRE). Formation of heterodimers with ARF proteins may alter their ability to modulate early auxin response genes expression. The protein is Auxin-responsive protein IAA11 (IAA11) of Arabidopsis thaliana (Mouse-ear cress).